Here is a 412-residue protein sequence, read N- to C-terminus: Peptidase T (412 aa).

A Zn(2+)-binding site is contributed by H81. D83 is an active-site residue. A Zn(2+)-binding site is contributed by D144. E178 serves as the catalytic Proton acceptor. Residues E179, D201, and H383 each contribute to the Zn(2+) site.

It belongs to the peptidase M20B family. Requires Zn(2+) as cofactor.

The protein localises to the cytoplasm. The enzyme catalyses Release of the N-terminal residue from a tripeptide.. Functionally, cleaves the N-terminal amino acid of tripeptides. This is Peptidase T from Bacillus cereus (strain Q1).